The sequence spans 234 residues: Sugar fermentation stimulation protein A (234 aa).

The segment at residues 201–220 (LLSEAQQRGVEILAYKAEIS) is a DNA-binding region (H-T-H motif).

Belongs to the SfsA family.

Its function is as follows. Binds to DNA non-specifically. Could be a regulatory factor involved in maltose metabolism. The chain is Sugar fermentation stimulation protein A from Shigella boydii serotype 4 (strain Sb227).